The sequence spans 261 residues: MKNPLKTIRETKPLVHHITNWVTIYDCANITRAFGALPVMAHAPEECADMTGISSALVLNIGTLTSEIIDSMLLSAAAANKKKIPVVLDAVGVGATRFRDEMAAKILGSVRVDIIKGNYSEIAKLAGENAETKGVESTSISADPQKVAKEFAKSSSSVVVMTGKEDVISDGNRTFVVKNGHELMGSIVGTGCMAASIIGSFASVNPDYCDAAKDALCYFGAAGELAAKNSAGPGSFKVNLYDEVFNLSDEKVQAMMKVEEL.

Met40 serves as a coordination point for substrate. Positions 116 and 162 each coordinate ATP. Gly189 is a substrate binding site.

Belongs to the Thz kinase family. Mg(2+) serves as cofactor.

The catalysed reaction is 5-(2-hydroxyethyl)-4-methylthiazole + ATP = 4-methyl-5-(2-phosphooxyethyl)-thiazole + ADP + H(+). Its pathway is cofactor biosynthesis; thiamine diphosphate biosynthesis; 4-methyl-5-(2-phosphoethyl)-thiazole from 5-(2-hydroxyethyl)-4-methylthiazole: step 1/1. Catalyzes the phosphorylation of the hydroxyl group of 4-methyl-5-beta-hydroxyethylthiazole (THZ). This is Hydroxyethylthiazole kinase from Methanosarcina mazei (strain ATCC BAA-159 / DSM 3647 / Goe1 / Go1 / JCM 11833 / OCM 88) (Methanosarcina frisia).